A 574-amino-acid polypeptide reads, in one-letter code: Cocaine esterase (574 aa).

Residues 1-144 form a 1A region; that stretch reads MVDGNYSVAS…KAIAPSMASA (144 aa). A substrate-binding site is contributed by Tyr44. Catalysis depends on Ser117, which acts as the Acyl-ester intermediate. Residue Tyr118 coordinates substrate. Residues 145–240 are 2; that stretch reads DLYRAPWYGP…NDESWQSISL (96 aa). The interval 241–354 is 1B; sequence FERLGGLATP…WRDETDWPLP (114 aa). Residues Asp259 and His287 each act as charge relay system in the active site. The segment at 355–574 is 3; that stretch reads DTAYTPFYLG…SHIVLPIIKR (220 aa).

Belongs to the CocE/NonD hydrolase family. In terms of assembly, homodimer. The protein aggregates upon heat inactivation.

Its subcellular location is the cytoplasm. It catalyses the reaction cocaine + H2O = ecgonine methyl ester + benzoate + H(+). The protein operates within alkaloid degradation; cocaine degradation. Its function is as follows. Hydrolyzes cocaine to benzoate and ecgonine methyl ester, endowing the bacteria with the ability to utilize cocaine as a sole source of carbon and energy for growth, as this bacterium lives in the rhizosphere of coca plants. Also efficiently hydrolyzes cocaethylene, a more potent cocaine metabolite that has been observed in patients who concurrently abuse cocaine and alcohol. Is able to prevent cocaine-induced convulsions and lethality in rat. This chain is Cocaine esterase (cocE), found in Rhodococcus sp. (strain MB1 Bresler).